Consider the following 154-residue polypeptide: Myoglobin (154 aa).

The 147-residue stretch at 2 to 148 folds into the Globin domain; it reads GLSDGEWQLV…FRNDIAAKYK (147 aa). Serine 4 bears the Phosphoserine mark. Histidine 65 is a nitrite binding site. Residue histidine 65 coordinates O2. Threonine 68 is modified (phosphothreonine). Histidine 94 is a binding site for heme b.

This sequence belongs to the globin family. Monomeric.

It is found in the cytoplasm. It localises to the sarcoplasm. The catalysed reaction is Fe(III)-heme b-[protein] + nitric oxide + H2O = Fe(II)-heme b-[protein] + nitrite + 2 H(+). It carries out the reaction H2O2 + AH2 = A + 2 H2O. Its function is as follows. Monomeric heme protein which primary function is to store oxygen and facilitate its diffusion within muscle tissues. Reversibly binds oxygen through a pentacoordinated heme iron and enables its timely and efficient release as needed during periods of heightened demand. Depending on the oxidative conditions of tissues and cells, and in addition to its ability to bind oxygen, it also has a nitrite reductase activity whereby it regulates the production of bioactive nitric oxide. Under stress conditions, like hypoxia and anoxia, it also protects cells against reactive oxygen species thanks to its pseudoperoxidase activity. This chain is Myoglobin (MB), found in Meles meles (Eurasian badger).